A 340-amino-acid chain; its full sequence is Glucan endo-1,3-beta-glucosidase (340 aa).

The N-terminal stretch at 1-28 is a signal peptide; sequence MATKASLSIKGFALLVSVLVAVPTRVQS. Glu-122 (proton donor) is an active-site residue. Glu-264 (nucleophile) is an active-site residue.

Belongs to the glycosyl hydrolase 17 family. In terms of assembly, monomer. In terms of tissue distribution, expressed in fruit peel and pulp.

It catalyses the reaction Hydrolysis of (1-&gt;3)-beta-D-glucosidic linkages in (1-&gt;3)-beta-D-glucans.. Possesses beta-1,3-endoglucanase activity in vitro. May play a role in fruit pulp softening process. Can cleave beta-1,6-branched glucans in vitro. This chain is Glucan endo-1,3-beta-glucosidase, found in Musa acuminata (Banana).